A 405-amino-acid polypeptide reads, in one-letter code: Serine/threonine-protein kinase 2 (405 aa).

The region spanning N54–N405 is the Protein kinase domain. Residues I60–V68 and K84 each bind ATP. The Proton acceptor role is filled by D274.

Belongs to the protein kinase superfamily. Ser/Thr protein kinase family. Poxviruses subfamily. In terms of processing, phosphorylated in vivo. Autophosphorylated in vitro.

Its subcellular location is the host endoplasmic reticulum. The protein localises to the host endoplasmic reticulum-Golgi intermediate compartment. It carries out the reaction L-seryl-[protein] + ATP = O-phospho-L-seryl-[protein] + ADP + H(+). The enzyme catalyses L-threonyl-[protein] + ATP = O-phospho-L-threonyl-[protein] + ADP + H(+). Its function is as follows. Essential serine-protein kinase involved in the early stage of virion morphogenesis. The protein is Serine/threonine-protein kinase 2 (OPG054) of Vaccinia virus (strain L-IVP) (VACV).